A 304-amino-acid chain; its full sequence is MPQQLSPINIETKKAISNARLKPLDIHYNESKPTTIQNTGKLVRINFKGGYISGGFLPNEYVLSSLHIYWGKEDDYGSNHLIDVYKYSGEINLVHWNKKKYSSYEEAKKHDDGLIIISIFLQVSDHKNVYFQKIVNQLDSIRSANTSAPFDSVFYLDNLLPSTLDYFTYLGTTINHSADAAWIIFPTPINIHSDQLSKFRTLLSSSNHDGKPHYITENYRNPYKLNDDTQVYYSGEIIRAATTSPARDNYFMRWLSDLRETCFSYYQKYIEGNKTFAIIAIVFVFILTAILFLMSRRYSREKQN.

The Alpha-carbonic anhydrase domain occupies 1–235 (MPQQLSPINI…NDDTQVYYSG (235 aa)). The Virion surface portion of the chain corresponds to 1-275 (MPQQLSPINI…YQKYIEGNKT (275 aa)). The chain crosses the membrane as a helical span at residues 276 to 294 (FAIIAIVFVFILTAILFLM). The Intravirion segment spans residues 295 to 304 (SRRYSREKQN).

This sequence belongs to the alpha-carbonic anhydrase family. Homodimer; disulfide-linked. Apparently non-glycosylated.

The protein localises to the virion membrane. Its function is as follows. Binds to chondroitin sulfate on the cell surface to provide virion attachment to target cell. The protein is Cell surface-binding protein OPG105 (OPG105) of Rabbitpox virus (strain Utrecht) (RPV).